The sequence spans 96 residues: Co-chaperonin GroES (96 aa).

It belongs to the GroES chaperonin family. As to quaternary structure, heptamer of 7 subunits arranged in a ring. Interacts with the chaperonin GroEL.

It is found in the cytoplasm. Its function is as follows. Together with the chaperonin GroEL, plays an essential role in assisting protein folding. The GroEL-GroES system forms a nano-cage that allows encapsulation of the non-native substrate proteins and provides a physical environment optimized to promote and accelerate protein folding. GroES binds to the apical surface of the GroEL ring, thereby capping the opening of the GroEL channel. This chain is Co-chaperonin GroES, found in Neisseria gonorrhoeae (strain ATCC 700825 / FA 1090).